A 153-amino-acid chain; its full sequence is Interleukin-2 (153 aa).

The first 20 residues, 1-20 (MYRMQLLSCIALSLALVTNS), serve as a signal peptide directing secretion. An O-linked (GalNAc...) threonine glycan is attached at Thr23. Cys78 and Cys125 form a disulfide bridge.

Belongs to the IL-2 family.

It is found in the secreted. Cytokine produced by activated CD4-positive helper T-cells and to a lesser extend activated CD8-positive T-cells and natural killer (NK) cells that plays pivotal roles in the immune response and tolerance. Binds to a receptor complex composed of either the high-affinity trimeric IL-2R (IL2RA/CD25, IL2RB/CD122 and IL2RG/CD132) or the low-affinity dimeric IL-2R (IL2RB and IL2RG). Interaction with the receptor leads to oligomerization and conformation changes in the IL-2R subunits resulting in downstream signaling starting with phosphorylation of JAK1 and JAK3. In turn, JAK1 and JAK3 phosphorylate the receptor to form a docking site leading to the phosphorylation of several substrates including STAT5. This process leads to activation of several pathways including STAT, phosphoinositide-3-kinase/PI3K and mitogen-activated protein kinase/MAPK pathways. Functions as a T-cell growth factor and can increase NK-cell cytolytic activity as well. Promotes strong proliferation of activated B-cells and subsequently immunoglobulin production. Plays a pivotal role in regulating the adaptive immune system by controlling the survival and proliferation of regulatory T-cells, which are required for the maintenance of immune tolerance. Moreover, participates in the differentiation and homeostasis of effector T-cell subsets, including Th1, Th2, Th17 as well as memory CD8-positive T-cells. The sequence is that of Interleukin-2 (IL2) from Homo sapiens (Human).